The chain runs to 380 residues: Apelin receptor (380 aa).

Residues 1-30 (MEEGGDFDNYYGADNQSECEYTDWKSSGAL) lie on the Extracellular side of the membrane. An N-linked (GlcNAc...) asparagine glycan is attached at asparagine 15. 2 disulfides stabilise this stretch: cysteine 19-cysteine 281 and cysteine 102-cysteine 181. A helical transmembrane segment spans residues 31–54 (IPAIYMLVFLLGTTGNGLVLWTVF). Residues 55-64 (RSSREKRRSA) are Cytoplasmic-facing. A helical membrane pass occupies residues 65–86 (DIFIASLAVADLTFVVTLPLWA). The Extracellular portion of the chain corresponds to 87 to 99 (TYTYRDYDWPFGT). Residues 100-125 (FSCKLSSYLIFVNMYASVFCLTGLSF) traverse the membrane as a helical segment. The Cytoplasmic segment spans residues 126–146 (DRYLAIVRPVANARLRLRVSG). Residues 147-164 (AVATAVLWVLAALLAMPV) traverse the membrane as a helical segment. The Extracellular segment spans residues 165 to 198 (MVFRTTGDLENTTKVQCYMDYSMVATVSSDWAWE). Asparagine 175 carries an N-linked (GlcNAc...) asparagine glycan. A helical membrane pass occupies residues 199-223 (VGLGVSSTTVGFVVPFTIMLTCYFF). Residues 224-246 (IAQTIAGHFRKERIEGLRKRRRL) lie on the Cytoplasmic side of the membrane. Residues 247–270 (LSIIVVLVVTFALCWMPYHLVKTL) form a helical membrane-spanning segment. The Extracellular portion of the chain corresponds to 271–289 (YMLGSLLHWPCDFDLFLMN). A helical transmembrane segment spans residues 290–312 (VFPYCTCISYVNSCLNPFLYAFF). Residues 313–380 (DPRFRQACTS…PYSQETLVVD (68 aa)) lie on the Cytoplasmic side of the membrane. Residues 342-351 (KSASYSSGHS) are compositionally biased toward low complexity. A disordered region spans residues 342 to 380 (KSASYSSGHSQGPGPNMGKGGEQMHEKSIPYSQETLVVD). The span at 371-380 (PYSQETLVVD) shows a compositional bias: polar residues.

It belongs to the G-protein coupled receptor 1 family. Homodimer; dimerization inhibits APLNR-mediated G protein and beta-arrestin signaling pathways compared to monomeric APLNR.

Its subcellular location is the cell membrane. Functionally, g protein-coupled receptor for peptide hormones apelin (APLN) and apelin receptor early endogenous ligand (APELA/ELA), that plays a role in the regulation of normal cardiovascular function and fluid homeostasis. When acting as apelin receptor, activates both G(i) protein pathway that inhibits adenylate cyclase activity, and the beta-arrestin pathway that promotes internalization of the receptor. APLNR/APJ also functions as mechanoreceptor that is activated by pathological stimuli in a G-protein-independent fashion to induce beta-arrestin signaling, hence eliciting cardiac hypertrophy. However, the presence of apelin ligand blunts cardiac hypertrophic induction from APLNR/APJ on response to pathological stimuli. Plays a key role in early development such as gastrulation, blood vessels formation and heart morphogenesis by acting as a APELA receptor. May promote angioblast migration toward the embryonic midline, i.e. the position of the future vessel formation, during vasculogenesis. Promotes sinus venosus (SV)-derived endothelial cells migration into the developing heart to promote coronary blood vessel development. Also plays a role in various processes in adults such as regulation of blood vessel formation, blood pressure, heart contractility and heart failure. (Microbial infection) Alternative coreceptor with CD4 for HIV-1 infection; may be involved in the development of AIDS dementia. The sequence is that of Apelin receptor (APLNR) from Macaca mulatta (Rhesus macaque).